The sequence spans 314 residues: Olfactory receptor 1468 (314 aa).

Over 1 to 25 (MTEENQTVISQFLLLGLPIPSEHQH) the chain is Extracellular. An N-linked (GlcNAc...) asparagine glycan is attached at asparagine 5. Residues 26–49 (VFYALFLSMYLTTVLGNLIIIILI) traverse the membrane as a helical segment. Topologically, residues 50–57 (HLDSHLHT) are cytoplasmic. A helical transmembrane segment spans residues 58-79 (PMYLFLSNLSFSDLCFSSVTMP). Residues 80–100 (KLLQNMQSQVPSIPFAGCLTQ) are Extracellular-facing. The cysteines at positions 97 and 189 are disulfide-linked. Residues 101–120 (LYFYLYFADLESFLLVAMAY) form a helical membrane-spanning segment. Residues 121 to 139 (DRYVAICFPLHYMSIMSPK) lie on the Cytoplasmic side of the membrane. A helical membrane pass occupies residues 140 to 158 (LCVSLVVLSWVLTTFHAML). Topologically, residues 159 to 196 (HTLLMARLSFCADNMIPHFFCDISPLLKLSCSDTHVNE) are extracellular. Residues 197 to 219 (LVIFVMGGLVIVIPFVLIIVSYA) traverse the membrane as a helical segment. The Cytoplasmic portion of the chain corresponds to 220–236 (RVVASILKVPSVRGIHK). Residues 237-260 (IFSTCGSHLSVVSLFYGTIIGLYL) form a helical membrane-spanning segment. At 261–272 (CPSANNSTVKET) the chain is on the extracellular side. A helical transmembrane segment spans residues 273–292 (VMAMMYTVVTPMLNPFIYSL). Residues 293-314 (RNRDMKEALIRVLCKKKITFCL) are Cytoplasmic-facing.

It belongs to the G-protein coupled receptor 1 family. As to expression, olfactory epithelium.

The protein resides in the cell membrane. Its function is as follows. Odorant receptor. The chain is Olfactory receptor 1468 (Olr1468) from Rattus norvegicus (Rat).